A 243-amino-acid polypeptide reads, in one-letter code: Orotidine 5'-phosphate decarboxylase (243 aa).

Residues Asp12, Lys34, 61-70 (DLKFHDIPNT), Thr125, Arg187, Gln196, Gly216, and Arg217 contribute to the substrate site. Lys63 functions as the Proton donor in the catalytic mechanism.

It belongs to the OMP decarboxylase family. Type 1 subfamily. Homodimer.

It carries out the reaction orotidine 5'-phosphate + H(+) = UMP + CO2. It functions in the pathway pyrimidine metabolism; UMP biosynthesis via de novo pathway; UMP from orotate: step 2/2. Catalyzes the decarboxylation of orotidine 5'-monophosphate (OMP) to uridine 5'-monophosphate (UMP). This Heliobacterium modesticaldum (strain ATCC 51547 / Ice1) protein is Orotidine 5'-phosphate decarboxylase.